The sequence spans 538 residues: Nucleobase-ascorbate transporter 7 (538 aa).

Residues 1–11 (MAGGGGGGGGV) are compositionally biased toward gly residues. A disordered region spans residues 1–20 (MAGGGGGGGGVAPPLKHDGL). The next 12 membrane-spanning stretches (helical) occupy residues 45 to 65 (AILL…LIPT), 81 to 101 (MVQT…FFGT), 103 to 123 (LPAV…IILA), 143 to 163 (IQGA…SGLW), 166 to 186 (VVRL…GFGL), 191 to 211 (FPLL…LLLF), 229 to 249 (FAVI…TVGG), 295 to 315 (FAMM…YIVV), 372 to 394 (VVQI…AIFA), 398 to 420 (APVV…LSLL), 432 to 452 (FILG…NQYT), and 471 to 491 (INVP…FLDV).

Belongs to the nucleobase:cation symporter-2 (NCS2) (TC 2.A.40) family. In terms of tissue distribution, expressed exclusively in ovules.

It localises to the cell membrane. The polypeptide is Nucleobase-ascorbate transporter 7 (NAT7) (Arabidopsis thaliana (Mouse-ear cress)).